We begin with the raw amino-acid sequence, 360 residues long: Magnesium-protoporphyrin IX monomethyl ester [oxidative] cyclase (360 aa).

Residues 1-20 are disordered; that stretch reads MVPPTAIAEASRSGGEPAIK.

The protein belongs to the AcsF family. Fe cation is required as a cofactor.

It catalyses the reaction Mg-protoporphyrin IX 13-monomethyl ester + 3 NADPH + 3 O2 + 2 H(+) = 3,8-divinyl protochlorophyllide a + 3 NADP(+) + 5 H2O. It participates in porphyrin-containing compound metabolism; chlorophyll biosynthesis (light-independent). Catalyzes the formation of the isocyclic ring in chlorophyll biosynthesis. Mediates the cyclase reaction, which results in the formation of divinylprotochlorophyllide (Pchlide) characteristic of all chlorophylls from magnesium-protoporphyrin IX 13-monomethyl ester (MgPMME). The polypeptide is Magnesium-protoporphyrin IX monomethyl ester [oxidative] cyclase (Synechococcus sp. (strain RCC307)).